A 125-amino-acid polypeptide reads, in one-letter code: Aspartate 1-decarboxylase 2 (125 aa).

Ser-25 acts as the Schiff-base intermediate with substrate; via pyruvic acid in catalysis. The residue at position 25 (Ser-25) is a Pyruvic acid (Ser). Position 57 (Thr-57) interacts with substrate. The Proton donor role is filled by Tyr-58. Residue 73–75 (GAA) participates in substrate binding.

It belongs to the PanD family. As to quaternary structure, heterooctamer of four alpha and four beta subunits. Pyruvate is required as a cofactor. Post-translationally, is synthesized initially as an inactive proenzyme, which is activated by self-cleavage at a specific serine bond to produce a beta-subunit with a hydroxyl group at its C-terminus and an alpha-subunit with a pyruvoyl group at its N-terminus.

It localises to the cytoplasm. It catalyses the reaction L-aspartate + H(+) = beta-alanine + CO2. Its pathway is cofactor biosynthesis; (R)-pantothenate biosynthesis; beta-alanine from L-aspartate: step 1/1. Functionally, catalyzes the pyruvoyl-dependent decarboxylation of aspartate to produce beta-alanine. The chain is Aspartate 1-decarboxylase 2 from Gloeobacter violaceus (strain ATCC 29082 / PCC 7421).